The sequence spans 515 residues: Fc receptor-like protein 4 (515 aa).

A signal peptide spans 1–19; the sequence is MLLWASLLAFAPVCGQSAA. The Extracellular segment spans residues 20-387; it reads AHKPVISVHP…RETPGNRDGL (368 aa). 4 Ig-like C2-type domains span residues 23–97, 102–183, 193–271, and 275–374; these read PVIS…NPVR, SDSL…NFKI, PELK…GNIH, and PSLQ…MVLN. Cystine bridges form between C44–C85, C123–C167, C212–C261, and C310–C359. Residue N374 is glycosylated (N-linked (GlcNAc...) asparagine). Residues 388–408 form a helical membrane-spanning segment; sequence VAAGATGGLLSALLLAVALLF. Over 409–515 the chain is Cytoplasmic; that stretch reads HCWRRRKSGV…GKISSKDEES (107 aa). 3 consecutive short sequence motifs (ITIM motif) follow at residues 449–454, 461–466, and 491–496; these read SLYVDV, LVYSEI, and VVYSEV. A disordered region spans residues 494 to 515; it reads SEVKTQHPDNSAGKISSKDEES.

In terms of assembly, interacts with PTPN6 and PTPN11. Phosphorylated on cytoplasmic tyrosines upon activation. Specifically expressed by memory and monocytoid B-cells which populate spleen and lymph nodes. Preferentially expressed in memory B-cells associated with mucosal tissue (at protein level).

It localises to the cell membrane. Its function is as follows. May function as an inhibitor of the B-cell receptor signaling. May function in the B-cell-mediated immune response. The protein is Fc receptor-like protein 4 (FCRL4) of Homo sapiens (Human).